The chain runs to 198 residues: Large ribosomal subunit protein bL25 (198 aa).

This sequence belongs to the bacterial ribosomal protein bL25 family. CTC subfamily. In terms of assembly, part of the 50S ribosomal subunit; part of the 5S rRNA/L5/L18/L25 subcomplex. Contacts the 5S rRNA. Binds to the 5S rRNA independently of L5 and L18.

This is one of the proteins that binds to the 5S RNA in the ribosome where it forms part of the central protuberance. In Streptomyces coelicolor (strain ATCC BAA-471 / A3(2) / M145), this protein is Large ribosomal subunit protein bL25.